A 177-amino-acid chain; its full sequence is Plasmid transfer protein TraF (177 aa).

An N-terminal signal peptide occupies residues 1–30; it reads MSRFQRLTKYVAIGGGAALLLAGAAYLAGA.

The protein belongs to the peptidase S26C family.

The protein localises to the periplasm. Its function is as follows. Required for donor-specific phage sensitivity. May be involved in pilus assembly. This is Plasmid transfer protein TraF (traF) from Escherichia coli.